Consider the following 433-residue polypeptide: MVISPSLSALHTLAHNARQAALHLGSLNTAERNQAIAAIADGLTAAMPEILAANQEDCAAAEAMGIAKPLYNRLLLGESKLKSTIAGVKDVEHLPDPLGQVTLHRQLDEGLVLKRVGCPLGVLGVIFEARPEALIQISSLAIKSGNAVILKGGREATRSCQVLTEVIQTALAKTVVSPEAINLLTTREEIRELLGLNQYVDLIIPRGSNEFVQYIQQNTQIPVLGHADGICHLYLDAQADLSKAIPITVDAKTQYPAACNAIETLLVHQAIAAEFLPPLAQALGEKGVSLRGDSGTQKLIDCEPATEADWCTEYSDLILSIKIVDSLEAAIDHINQYGSKHTDGIISEDLTAAEQFCQRVDSAGVYHNCSTRFADGFRYGFGAEVGISTQKMPPRGPVGLEGLVTYKYQLWGHGHIAATYTGQGAKAFTHLDL.

It belongs to the gamma-glutamyl phosphate reductase family.

The protein resides in the cytoplasm. The catalysed reaction is L-glutamate 5-semialdehyde + phosphate + NADP(+) = L-glutamyl 5-phosphate + NADPH + H(+). It participates in amino-acid biosynthesis; L-proline biosynthesis; L-glutamate 5-semialdehyde from L-glutamate: step 2/2. Catalyzes the NADPH-dependent reduction of L-glutamate 5-phosphate into L-glutamate 5-semialdehyde and phosphate. The product spontaneously undergoes cyclization to form 1-pyrroline-5-carboxylate. This is Gamma-glutamyl phosphate reductase 1 from Synechocystis sp. (strain ATCC 27184 / PCC 6803 / Kazusa).